Here is a 930-residue protein sequence, read N- to C-terminus: Isoleucine--tRNA ligase (930 aa).

Positions 57–67 (PYANGNIHVGH) match the 'HIGH' region motif. An L-isoleucyl-5'-AMP-binding site is contributed by glutamate 554. Residues 595–599 (KMSKS) carry the 'KMSKS' region motif. Lysine 598 provides a ligand contact to ATP. Cysteine 888, cysteine 891, cysteine 908, and cysteine 911 together coordinate Zn(2+).

Belongs to the class-I aminoacyl-tRNA synthetase family. IleS type 1 subfamily. In terms of assembly, monomer. The cofactor is Zn(2+).

Its subcellular location is the cytoplasm. It catalyses the reaction tRNA(Ile) + L-isoleucine + ATP = L-isoleucyl-tRNA(Ile) + AMP + diphosphate. In terms of biological role, catalyzes the attachment of isoleucine to tRNA(Ile). As IleRS can inadvertently accommodate and process structurally similar amino acids such as valine, to avoid such errors it has two additional distinct tRNA(Ile)-dependent editing activities. One activity is designated as 'pretransfer' editing and involves the hydrolysis of activated Val-AMP. The other activity is designated 'posttransfer' editing and involves deacylation of mischarged Val-tRNA(Ile). The polypeptide is Isoleucine--tRNA ligase (Streptococcus sanguinis (strain SK36)).